We begin with the raw amino-acid sequence, 261 residues long: 3beta-hydroxysteroid dehydrogenase 1 (261 aa).

Residues 65–66 (DV), N92, Y158, and K162 each bind NAD(+). Y158 serves as the catalytic Proton acceptor.

The protein belongs to the short-chain dehydrogenases/reductases (SDR) family.

It catalyses the reaction 3-oxo-5beta-cholan-24-oate + NADH + H(+) = isolithocholate + NAD(+). It carries out the reaction 12alpha-hydroxy-3-oxo-5beta-cholan-24-oate + NADH + H(+) = isodeoxycholate + NAD(+). The catalysed reaction is 7alpha,12alpha-dihydroxy-3-oxo-5beta-cholan-24-oate + NADH + H(+) = isocholate + NAD(+). The enzyme catalyses 3-oxochenodeoxycholate + NADH + H(+) = isochenodeoxycholate + NAD(+). Functionally, involved in the modification of secondary bile acids into iso-bile acids (3beta-bile acids) via epimerization of the 3-OH group through a 3-oxo-intermediate. Catalyzes the reduction of 12-alpha-hydroxy-3-oxo-5-beta-cholan-24-oate (3-oxo-DCA) and 3-oxo-5-beta-cholan-24-oate (3-oxo-LCA) to yield isodeoxycholate (isoDCA) and isolithocholate (isoLCA), respectively. Is also able to catalyze the reduction of 3-dehydrocholate (3-oxo-CA or 7alpha,12alpha-dihydroxy-3-oxo-5beta-cholan-24-oate) and 7-alpha-hydroxy-3-oxo-5-beta-cholan-24-oate (3-oxo-CDCA), into isocholate (isoCA) and isochenodeoxycholate (isoCDCA), respectively. Prefers NADH to NADPH as cosubstrate. The conversion of the abundant bile acid deoxycholate (DCA) into isoDCA by the gut bacterium E.lenta favors the growth of the keystone commensal genus Bacteroides, since isoDCA is less cytotoxic than its parent compound, DCA; iso-bile acids have thus a potential role in modulating gut community composition. The protein is 3beta-hydroxysteroid dehydrogenase 1 of Eggerthella lenta (strain ATCC 25559 / DSM 2243 / CCUG 17323 / JCM 9979 / KCTC 3265 / NCTC 11813 / VPI 0255 / 1899 B) (Eubacterium lentum).